Reading from the N-terminus, the 438-residue chain is Methyl-coenzyme M reductase subunit beta (438 aa).

Residue Tyr367 participates in coenzyme M binding. Gly369 serves as a coordination point for coenzyme B.

Belongs to the methyl-coenzyme M reductase beta subunit family. In terms of assembly, MCR is a hexamer of two alpha, two beta, and two gamma chains, forming a dimer of heterotrimers. Coenzyme F430 is required as a cofactor.

The protein localises to the cytoplasm. It carries out the reaction coenzyme B + methyl-coenzyme M = methane + coenzyme M-coenzyme B heterodisulfide. It functions in the pathway one-carbon metabolism; methyl-coenzyme M reduction; methane from methyl-coenzyme M: step 1/1. In terms of biological role, component of the methyl-coenzyme M reductase (MCR) I that catalyzes the reductive cleavage of methyl-coenzyme M (CoM-S-CH3 or 2-(methylthio)ethanesulfonate) using coenzyme B (CoB or 7-mercaptoheptanoylthreonine phosphate) as reductant which results in the production of methane and the mixed heterodisulfide of CoB and CoM (CoM-S-S-CoB). This is the final step in methanogenesis. In Methanothermus fervidus, this protein is Methyl-coenzyme M reductase subunit beta (mcrB).